The primary structure comprises 198 residues: Ion-translocating oxidoreductase complex subunit B (198 aa).

A hydrophobic region spans residues 1 to 28 (MIITTVYFILVAIAVLALIFGAILGFAS). Residues 34–92 (EADPIVEKIDALLPQSQCGQCGYPGCKPYAEAIANGDDITKCIPGGQTVIVNIAELMGV) enclose the 4Fe-4S domain. Residues C51, C54, C59, C75, C115, C118, C121, C125, C145, C148, C151, and C155 each contribute to the [4Fe-4S] cluster site. 4Fe-4S ferredoxin-type domains follow at residues 106–135 (MVAFIDEDMCIGCTKCIQACPVDAIIGTNK) and 136–165 (AMHTIIPDLCTGCELCVPPCPTDCISMIKV).

This sequence belongs to the 4Fe4S bacterial-type ferredoxin family. RnfB subfamily. As to quaternary structure, the complex is composed of six subunits: RnfA, RnfB, RnfC, RnfD, RnfE and RnfG. Requires [4Fe-4S] cluster as cofactor.

The protein resides in the cell inner membrane. Its function is as follows. Part of a membrane-bound complex that couples electron transfer with translocation of ions across the membrane. The protein is Ion-translocating oxidoreductase complex subunit B of Pasteurella multocida (strain Pm70).